A 305-amino-acid polypeptide reads, in one-letter code: UDP-3-O-acyl-N-acetylglucosamine deacetylase (305 aa).

3 residues coordinate Zn(2+): histidine 78, histidine 237, and aspartate 241. Residue histidine 264 is the Proton donor of the active site.

This sequence belongs to the LpxC family. It depends on Zn(2+) as a cofactor.

It carries out the reaction a UDP-3-O-[(3R)-3-hydroxyacyl]-N-acetyl-alpha-D-glucosamine + H2O = a UDP-3-O-[(3R)-3-hydroxyacyl]-alpha-D-glucosamine + acetate. Its pathway is glycolipid biosynthesis; lipid IV(A) biosynthesis; lipid IV(A) from (3R)-3-hydroxytetradecanoyl-[acyl-carrier-protein] and UDP-N-acetyl-alpha-D-glucosamine: step 2/6. In terms of biological role, catalyzes the hydrolysis of UDP-3-O-myristoyl-N-acetylglucosamine to form UDP-3-O-myristoylglucosamine and acetate, the committed step in lipid A biosynthesis. This Burkholderia mallei (strain NCTC 10247) protein is UDP-3-O-acyl-N-acetylglucosamine deacetylase.